The following is a 146-amino-acid chain: uncharacterized protein (146 aa).

Residues 1-24 form the signal peptide; that stretch reads MVIYYGKKNCTLLLLLFILCNIYS. Asn99 and Asn106 each carry an N-linked (GlcNAc...) asparagine glycan.

This is an uncharacterized protein from Saccharomyces cerevisiae (strain ATCC 204508 / S288c) (Baker's yeast).